A 250-amino-acid chain; its full sequence is Oil body-associated protein 2B (250 aa).

Residues 1-29 are disordered; sequence MSSSDQNPAATPASSGPAEPSPPGRPTAV. Positions 8–18 are enriched in low complexity; that stretch reads PAATPASSGPA.

The protein belongs to the OBAP family.

In Zea mays (Maize), this protein is Oil body-associated protein 2B.